We begin with the raw amino-acid sequence, 510 residues long: UDP-N-acetylmuramoylalanine--D-glutamate ligase (510 aa).

Residue 138 to 144 (GTNGKTT) participates in ATP binding. A disordered region spans residues 294 to 316 (FDEPAPAPRRKKDAPPPTRAGGR).

This sequence belongs to the MurCDEF family.

Its subcellular location is the cytoplasm. The catalysed reaction is UDP-N-acetyl-alpha-D-muramoyl-L-alanine + D-glutamate + ATP = UDP-N-acetyl-alpha-D-muramoyl-L-alanyl-D-glutamate + ADP + phosphate + H(+). It functions in the pathway cell wall biogenesis; peptidoglycan biosynthesis. In terms of biological role, cell wall formation. Catalyzes the addition of glutamate to the nucleotide precursor UDP-N-acetylmuramoyl-L-alanine (UMA). This chain is UDP-N-acetylmuramoylalanine--D-glutamate ligase, found in Bordetella pertussis (strain Tohama I / ATCC BAA-589 / NCTC 13251).